The chain runs to 423 residues: Glutamine synthetase, chloroplastic (423 aa).

The N-terminal 51 residues, 1–51 (MAQAVVPAMQCRVGVKAAAGRVWSAGRTRTGRGGASPGFKVMAVSTGSTGV), are a transit peptide targeting the chloroplast. Residues 70–150 (VIAEYIWVGG…VICDTYTPQG (81 aa)) form the GS beta-grasp domain. Residues 89-115 (RTISKPVEDPSELPKWNYDGSSTGQAP) are disordered. In terms of domain architecture, GS catalytic spans 154-423 (PTNKRHRAAQ…LAAKKLALKV (270 aa)).

The protein belongs to the glutamine synthetase family. In terms of assembly, homooctamer.

The protein resides in the plastid. Its subcellular location is the chloroplast. The catalysed reaction is L-glutamate + NH4(+) + ATP = L-glutamine + ADP + phosphate + H(+). In terms of biological role, the light-modulated chloroplast enzyme, encoded by a nuclear gene and expressed primarily in leaves, is responsible for the reassimilation of the ammonia generated by photorespiration. This Zea mays (Maize) protein is Glutamine synthetase, chloroplastic (GLN2).